Reading from the N-terminus, the 117-residue chain is UPF0342 protein Bcer98_0695 (117 aa).

Belongs to the UPF0342 family.

This chain is UPF0342 protein Bcer98_0695, found in Bacillus cytotoxicus (strain DSM 22905 / CIP 110041 / 391-98 / NVH 391-98).